The primary structure comprises 129 residues: Small ribosomal subunit protein uS11 (129 aa).

This sequence belongs to the universal ribosomal protein uS11 family. In terms of assembly, part of the 30S ribosomal subunit. Interacts with proteins S7 and S18. Binds to IF-3.

Located on the platform of the 30S subunit, it bridges several disparate RNA helices of the 16S rRNA. Forms part of the Shine-Dalgarno cleft in the 70S ribosome. The chain is Small ribosomal subunit protein uS11 from Caulobacter sp. (strain K31).